The following is a 426-amino-acid chain: Serine--tRNA ligase (426 aa).

230–232 (TAE) is a binding site for L-serine. 261 to 263 (RSE) provides a ligand contact to ATP. Position 284 (Glu-284) interacts with L-serine. 348–351 (EISS) is an ATP binding site. Residue Ser-384 coordinates L-serine.

It belongs to the class-II aminoacyl-tRNA synthetase family. Type-1 seryl-tRNA synthetase subfamily. In terms of assembly, homodimer. The tRNA molecule binds across the dimer.

The protein resides in the cytoplasm. The enzyme catalyses tRNA(Ser) + L-serine + ATP = L-seryl-tRNA(Ser) + AMP + diphosphate + H(+). It catalyses the reaction tRNA(Sec) + L-serine + ATP = L-seryl-tRNA(Sec) + AMP + diphosphate + H(+). It functions in the pathway aminoacyl-tRNA biosynthesis; selenocysteinyl-tRNA(Sec) biosynthesis; L-seryl-tRNA(Sec) from L-serine and tRNA(Sec): step 1/1. Catalyzes the attachment of serine to tRNA(Ser). Is also able to aminoacylate tRNA(Sec) with serine, to form the misacylated tRNA L-seryl-tRNA(Sec), which will be further converted into selenocysteinyl-tRNA(Sec). In Novosphingobium aromaticivorans (strain ATCC 700278 / DSM 12444 / CCUG 56034 / CIP 105152 / NBRC 16084 / F199), this protein is Serine--tRNA ligase.